A 3146-amino-acid chain; its full sequence is Bassianolide nonribosomal cyclodepsipeptide synthetase (3146 aa).

Residues 1-12 (MEPPNNANTGQL) show a composition bias toward polar residues. Residues 1-23 (MEPPNNANTGQLGPTLPNGTVDL) are disordered. Residues 69-454 (HVVYEIPEDV…INKLQSTDGS (386 aa)) are condensation 1. The adenylation 1 stretch occupies residues 495-887 (GDTPNKPAVC…GRMDSQVKIR (393 aa)). One can recognise a Carrier 1 domain in the interval 1015 to 1091 (PDASAGVTKL…SLQAAIGGSS (77 aa)). Residue Ser1052 is modified to O-(pantetheine 4'-phosphoryl)serine. The interval 1109–1538 (SYSQGRLWFL…QTLISVVPLT (430 aa)) is condensation 2. The adenylation 2 stretch occupies residues 1567–1973 (FRTQVASYPD…GRMDFQFKIR (407 aa)). Residues 2041 to 2181 (TYTELDTVSS…FPTRDYLERV (141 aa)) form an S-adenosyl-L-methionine-dependent N-methyltransferase (MT) region. Carrier domains are found at residues 2514–2588 (FPLS…RQQL) and 2614–2688 (APTT…EVSQ). O-(pantetheine 4'-phosphoryl)serine is present on residues Ser2548 and Ser2648. Residues 2734 to 3138 (QDVYLATHLQ…THLMEQVCNT (405 aa)) form a condensation 3 region.

The protein belongs to the NRP synthetase family.

The catalysed reaction is 4 (R)-2-hydroxy-3-methylbutanoate + 4 L-leucine + 4 S-adenosyl-L-methionine + 8 ATP = bassianolide + 8 AMP + 4 S-adenosyl-L-homocysteine + 8 diphosphate + 8 H(+). In terms of biological role, bassianolide nonribosomal synthetase that mediates the biosynthesis of bassianolide (BSL), a non-ribosomal cyclodepsipeptide that shows insecticidal and cancer cell antiproliferative activity. BSLS first catalyzes the iterative synthesis of an enzyme-bound dipeptidol monomer intermediate from D-2-hydroxyisovalerate and L-leucine before performing the condensation and cyclization of 4 dipeptidol monomers to yield the cyclic tetrameric ester bassianolide. The N-methyltransferase MT domain is responsible for the methylation of the leucine residues of bassianolide. BSLS is flexible with both the amino acid and hydroxyl acid precursors, and produces bassianolide as the major product (containing N-methyl-L-Leu), together with small amounts of beauvericin and its analogs beauvericins A-C (containing N-methyl-L-Phe). The chain is Bassianolide nonribosomal cyclodepsipeptide synthetase from Beauveria bassiana (White muscardine disease fungus).